Consider the following 249-residue polypeptide: ATP synthase subunit a (249 aa).

The next 6 membrane-spanning stretches (helical) occupy residues 30–50 (SAYM…GSAG), 84–104 (FFPL…VGII), 113–133 (HIIV…IYGF), 143–163 (IFVP…IEVF), 196–216 (LLAG…GMVV), and 221–241 (LELL…CIYL).

Belongs to the ATPase A chain family. As to quaternary structure, F-type ATPases have 2 components, CF(1) - the catalytic core - and CF(0) - the membrane proton channel. CF(1) has five subunits: alpha(3), beta(3), gamma(1), delta(1), epsilon(1). CF(0) has four main subunits: a, b, b' and c.

It is found in the cell inner membrane. In terms of biological role, key component of the proton channel; it plays a direct role in the translocation of protons across the membrane. The protein is ATP synthase subunit a of Rhodopseudomonas palustris (strain BisA53).